Reading from the N-terminus, the 156-residue chain is Cyclic pyranopterin monophosphate synthase (156 aa).

Substrate is bound by residues leucine 75–histidine 77 and methionine 111–glutamate 112. Aspartate 126 is an active-site residue.

The protein belongs to the MoaC family. Homohexamer; trimer of dimers.

It carries out the reaction (8S)-3',8-cyclo-7,8-dihydroguanosine 5'-triphosphate = cyclic pyranopterin phosphate + diphosphate. It functions in the pathway cofactor biosynthesis; molybdopterin biosynthesis. In terms of biological role, catalyzes the conversion of (8S)-3',8-cyclo-7,8-dihydroguanosine 5'-triphosphate to cyclic pyranopterin monophosphate (cPMP). The chain is Cyclic pyranopterin monophosphate synthase from Caulobacter sp. (strain K31).